Reading from the N-terminus, the 317-residue chain is 3',5'-bisphosphate nucleotidase (317 aa).

The Proton acceptor role is filled by D46. 4 residues coordinate Mg(2+): E69, D118, I120, and D121. T123 functions as the Proton acceptor in the catalytic mechanism. Residue T123 coordinates adenosine 3',5'-bisphosphate. AMP-binding residues include S198, H203, S227, K230, R244, Y251, and D257. Adenosine 3',5'-bisphosphate-binding residues include H203, S227, K230, and R244. D257 contributes to the Mg(2+) binding site. Residue D257 coordinates adenosine 3',5'-bisphosphate.

The protein belongs to the inositol monophosphatase superfamily. As to quaternary structure, monomer. It depends on Mg(2+) as a cofactor.

The protein localises to the cytoplasm. The enzyme catalyses adenosine 3',5'-bisphosphate + H2O = AMP + phosphate. It carries out the reaction 1D-myo-inositol 1,4-bisphosphate + H2O = 1D-myo-inositol 4-phosphate + phosphate. Inhibited by Li(2+). Its function is as follows. Phosphatase that converts 3'-phosphoadenosine 5'-phosphate (PAP) to AMP. Is also able to hydrolyze inositol 1,4-bisphosphate but with less efficiency. This Entamoeba histolytica (strain ATCC 30459 / HM-1:IMSS / ABRM) protein is 3',5'-bisphosphate nucleotidase.